Reading from the N-terminus, the 387-residue chain is 8-amino-7-oxononanoate synthase (387 aa).

Residue Arg20 participates in substrate binding. Position 107–108 (107–108 (GY)) interacts with pyridoxal 5'-phosphate. A substrate-binding site is contributed by His132. Pyridoxal 5'-phosphate-binding residues include Ser181, His209, and Thr238. The residue at position 241 (Lys241) is an N6-(pyridoxal phosphate)lysine. Thr355 contacts substrate.

The protein belongs to the class-II pyridoxal-phosphate-dependent aminotransferase family. BioF subfamily. As to quaternary structure, homodimer. Pyridoxal 5'-phosphate serves as cofactor.

The catalysed reaction is 6-carboxyhexanoyl-[ACP] + L-alanine + H(+) = (8S)-8-amino-7-oxononanoate + holo-[ACP] + CO2. The protein operates within cofactor biosynthesis; biotin biosynthesis. Catalyzes the decarboxylative condensation of pimeloyl-[acyl-carrier protein] and L-alanine to produce 8-amino-7-oxononanoate (AON), [acyl-carrier protein], and carbon dioxide. This is 8-amino-7-oxononanoate synthase from Dechloromonas aromatica (strain RCB).